The sequence spans 630 residues: Lysophospholipase 3 (630 aa).

A signal peptide spans 1-16 (MKALLSLLTAVAVATA). The 549-residue stretch at 39-587 (SCPATRPSIR…KEYCWNGTVD (549 aa)) folds into the PLA2c domain. N-linked (GlcNAc...) asparagine glycans are attached at residues Asn56, Asn95, Asn164, Asn220, Asn283, Asn351, Asn390, Asn443, Asn456, Asn462, Asn493, Asn514, Asn542, Asn566, and Asn583. A lipid anchor (GPI-like-anchor amidated asparagine) is attached at Asn606. Residues 607-630 (AAYTQGVTWLVGILAVGVAMGMTA) constitute a propeptide, removed in mature form.

This sequence belongs to the lysophospholipase family. The GPI-like anchor contains a phosphoceramide lipid group.

The protein resides in the cell membrane. It catalyses the reaction a 1-acyl-sn-glycero-3-phosphocholine + H2O = sn-glycerol 3-phosphocholine + a fatty acid + H(+). Catalyzes the release of fatty acids from lysophospholipids. This Aspergillus fumigatus (strain CBS 144.89 / FGSC A1163 / CEA10) (Neosartorya fumigata) protein is Lysophospholipase 3 (plb3).